Reading from the N-terminus, the 1132-residue chain is Fas-binding factor 1 homolog (1132 aa).

Disordered stretches follow at residues 18–50 (DDLL…LQAS), 65–84 (AEDM…PQAV), and 89–570 (KEMD…QSYE). Residues 35 to 46 (AGVSSGRARGSS) show a composition bias toward low complexity. 2 stretches are compositionally biased toward basic and acidic residues: residues 134–148 (APEK…DKKP) and 189–206 (GSER…EKDP). The span at 226–235 (TFEDDDDDMM) shows a compositional bias: acidic residues. 2 stretches are compositionally biased toward basic and acidic residues: residues 244–270 (QKGD…DELL) and 278–303 (ILER…PEKE). Composition is skewed to polar residues over residues 331–341 (RQSVSRFSAEN) and 388–410 (AKTS…SKPN). Composition is skewed to low complexity over residues 458-480 (ATST…ADSS) and 511-520 (PSDPAASSPA). The span at 534-548 (TMPSTPLQAASQLQA) shows a compositional bias: polar residues. 3 coiled-coil regions span residues 576–727 (RAAL…TSAT), 769–882 (ARQR…LAVE), and 918–1044 (LAKE…HKKL).

The protein resides in the cytoplasm. Its subcellular location is the cytoskeleton. It is found in the microtubule organizing center. It localises to the centrosome. The protein localises to the centriole. The protein resides in the spindle pole. Its subcellular location is the cell junction. Functionally, keratin-binding protein required for epithelial cell polarization. Required for ciliogenesis. In Gallus gallus (Chicken), this protein is Fas-binding factor 1 homolog (FBF1).